The following is a 274-amino-acid chain: Octanoyltransferase LipM (274 aa).

The BPL/LPL catalytic domain maps to 32-244 (GEVPPTLRFY…GFARALGLTL (213 aa)). Cysteine 146 serves as the catalytic Acyl-thioester intermediate.

Belongs to the octanoyltransferase LipM family. Monomer.

The enzyme catalyses octanoyl-[ACP] + L-lysyl-[protein] = N(6)-octanoyl-L-lysyl-[protein] + holo-[ACP] + H(+). The protein operates within protein modification; protein lipoylation via endogenous pathway; protein N(6)-(lipoyl)lysine from octanoyl-[acyl-carrier-protein]. Its function is as follows. Catalyzes the transfer of endogenously produced octanoic acid from octanoyl-acyl-carrier-protein onto the lipoyl domain of GcvH, an intermediate carrier during protein lipoylation. This chain is Octanoyltransferase LipM, found in Symbiobacterium thermophilum (strain DSM 24528 / JCM 14929 / IAM 14863 / T).